The chain runs to 127 residues: Large ribosomal subunit protein bL20 (127 aa).

This sequence belongs to the bacterial ribosomal protein bL20 family.

Binds directly to 23S ribosomal RNA and is necessary for the in vitro assembly process of the 50S ribosomal subunit. It is not involved in the protein synthesizing functions of that subunit. The protein is Large ribosomal subunit protein bL20 of Streptomyces griseus subsp. griseus (strain JCM 4626 / CBS 651.72 / NBRC 13350 / KCC S-0626 / ISP 5235).